The following is a 279-amino-acid chain: Tryptophan synthase alpha chain (279 aa).

Residues glutamate 50 and aspartate 61 each act as proton acceptor in the active site.

The protein belongs to the TrpA family. Tetramer of two alpha and two beta chains.

The enzyme catalyses (1S,2R)-1-C-(indol-3-yl)glycerol 3-phosphate + L-serine = D-glyceraldehyde 3-phosphate + L-tryptophan + H2O. The protein operates within amino-acid biosynthesis; L-tryptophan biosynthesis; L-tryptophan from chorismate: step 5/5. The alpha subunit is responsible for the aldol cleavage of indoleglycerol phosphate to indole and glyceraldehyde 3-phosphate. The sequence is that of Tryptophan synthase alpha chain from Brucella ovis (strain ATCC 25840 / 63/290 / NCTC 10512).